We begin with the raw amino-acid sequence, 984 residues long: Ephrin type-B receptor 1 (984 aa).

An N-terminal signal peptide occupies residues 1 to 17 (MALDCLLLFLLASAVAA). Residues 18–540 (MEETLMDTRT…YKSELREQLP (523 aa)) lie on the Extracellular side of the membrane. The Eph LBD domain maps to 19-201 (EETLMDTRTA…FFKKCPSIVQ (183 aa)). Fibronectin type-III domains follow at residues 322-432 (VPSG…TNQA) and 433-528 (APST…TLTD). Asn334, Asn426, and Asn480 each carry an N-linked (GlcNAc...) asparagine glycan. A helical transmembrane segment spans residues 541 to 563 (LIAGSAAAGVVFVVSLVAISIVC). At 564–984 (SRKRAYSKEA…QMNQSPSVMA (421 aa)) the chain is on the cytoplasmic side. Tyr600 bears the Phosphotyrosine mark. The 264-residue stretch at 619 to 882 (VKIEEVIGAG…EIVNTLDKMI (264 aa)) folds into the Protein kinase domain. Residues 625 to 633 (IGAGEFGEV) and Lys651 each bind ATP. Asp744 serves as the catalytic Proton acceptor. The region spanning 911 to 975 (TAFTTVDDWL…LSSIHSMRVQ (65 aa)) is the SAM domain. Position 928 is a phosphotyrosine; by autocatalysis (Tyr928). Positions 982–984 (VMA) match the PDZ-binding motif.

The protein belongs to the protein kinase superfamily. Tyr protein kinase family. Ephrin receptor subfamily. In terms of assembly, heterotetramer upon binding of the ligand. The heterotetramer is composed of an ephrin dimer and a receptor dimer. Oligomerization is probably required to induce biological responses. Interacts with EPHB6; transphosphorylates EPHB6 to form an active signaling complex. Interacts with PICK1. Interacts (through Tyr-594) with NCK1 (via SH2 domain); activates the JUN cascade to regulate cell adhesion. The ligand-activated form interacts (through Tyr-928) with GRB7 and GRB10 (via SH2 domains). The ligand-activated form interacts (residues within the catalytic domain) with GRB2 (via SH2 domain). Interacts with GRB2, SHC1 and SRC; activates the MAPK/ERK cascade to regulate cell migration. Interacts with CBL; regulates receptor degradation through ubiquitination. Interacts with ACP1. Post-translationally, phosphorylated. Autophosphorylation is stimulated by the ligand EFNB1. Required for interaction with SH2 domain-containing interactors, for activation of the MAPK/ERK and JUN signaling cascades and for ubiquitination by CBL. Ubiquitinated; (EFNB1)ligand-induced poly- and/or multi-ubiquitination by CBL is regulated by SRC and leads to lysosomal degradation. Restricted to brain and testes.

It is found in the cell membrane. Its subcellular location is the early endosome membrane. It localises to the cell projection. The protein localises to the dendrite. It catalyses the reaction L-tyrosyl-[protein] + ATP = O-phospho-L-tyrosyl-[protein] + ADP + H(+). Functionally, receptor tyrosine kinase which binds promiscuously transmembrane ephrin-B family ligands residing on adjacent cells, leading to contact-dependent bidirectional signaling into neighboring cells. The signaling pathway downstream of the receptor is referred to as forward signaling while the signaling pathway downstream of the ephrin ligand is referred to as reverse signaling. Cognate/functional ephrin ligands for this receptor include EFNB1, EFNB2 and EFNB3. During nervous system development, regulates retinal axon guidance redirecting ipsilaterally ventrotemporal retinal ganglion cells axons at the optic chiasm midline. This probably requires repulsive interaction with EFNB2. In the adult nervous system together with EFNB3, regulates chemotaxis, proliferation and polarity of the hippocampus neural progenitors. In addition to its role in axon guidance also plays an important redundant role with other ephrin-B receptors in development and maturation of dendritic spines and synapse formation. May also regulate angiogenesis. More generally, may play a role in targeted cell migration and adhesion. Upon activation by EFNB1 and probably other ephrin-B ligands activates the MAPK/ERK and the JNK signaling cascades to regulate cell migration and adhesion respectively. Involved in the maintenance of the pool of satellite cells (muscle stem cells) by promoting their self-renewal and reducing their activation and differentiation. The polypeptide is Ephrin type-B receptor 1 (Ephb1) (Rattus norvegicus (Rat)).